Here is a 395-residue protein sequence, read N- to C-terminus: THP3 homolog C2A9.11c (395 aa).

The interval 91-127 (LLSEEDEVDKKEKRRRRFENGSRSQNNAKSEELKVNP) is disordered. The region spanning 218 to 384 (DVGEYNQCQT…STDRFEKCMK (167 aa)) is the PCI domain.

Belongs to the THP3 family.

The protein resides in the cytoplasm. It localises to the nucleus. Functionally, required for transcription elongation. May also be involved in pre-mRNA splicing. The chain is THP3 homolog C2A9.11c from Schizosaccharomyces pombe (strain 972 / ATCC 24843) (Fission yeast).